A 373-amino-acid chain; its full sequence is Muscleblind-like protein 2 (373 aa).

C3H1-type zinc fingers lie at residues 13–41 (WLTLEVCRQYQRGTCSRSDEECKFAHPPK), 47–73 (NGRVIACFDSLKGRCSRENCKYLHPPT), 176–204 (TDKLEVCREFQRGNCARGETDCRFAHPAD), and 212–238 (DNTVTVCMDYIKGRCMREKCKYFHPPA).

This sequence belongs to the muscleblind family. Interacts with ITGA3.

It localises to the nucleus. Its subcellular location is the cytoplasm. Mediates pre-mRNA alternative splicing regulation. Acts either as activator or repressor of splicing on specific pre-mRNA targets. Inhibits cardiac troponin-T (TNNT2) pre-mRNA exon inclusion but induces insulin receptor (IR) pre-mRNA exon inclusion in muscle. Antagonizes the alternative splicing activity pattern of CELF proteins. RNA-binding protein that binds to 5'ACACCC-3' core sequence, termed zipcode, within the 3'UTR of ITGA3. Binds to CUG triplet repeat expansion in myotonic dystrophy muscle cells by sequestering the target RNAs. Together with RNA binding proteins RBPMS and RBFOX2, activates vascular smooth muscle cells alternative splicing events. Regulates NCOR2 alternative splicing. Seems to regulate expression and localization of ITGA3 by transporting it from the nucleus to cytoplasm at adhesion plaques. May play a role in myotonic dystrophy pathophysiology (DM). The polypeptide is Muscleblind-like protein 2 (Mbnl2) (Mus musculus (Mouse)).